The sequence spans 263 residues: Tryptophan synthase alpha chain (263 aa).

Catalysis depends on proton acceptor residues Glu-50 and Asp-61.

The protein belongs to the TrpA family. As to quaternary structure, tetramer of two alpha and two beta chains.

It catalyses the reaction (1S,2R)-1-C-(indol-3-yl)glycerol 3-phosphate + L-serine = D-glyceraldehyde 3-phosphate + L-tryptophan + H2O. The protein operates within amino-acid biosynthesis; L-tryptophan biosynthesis; L-tryptophan from chorismate: step 5/5. The alpha subunit is responsible for the aldol cleavage of indoleglycerol phosphate to indole and glyceraldehyde 3-phosphate. This chain is Tryptophan synthase alpha chain, found in Clostridium acetobutylicum (strain ATCC 824 / DSM 792 / JCM 1419 / IAM 19013 / LMG 5710 / NBRC 13948 / NRRL B-527 / VKM B-1787 / 2291 / W).